A 488-amino-acid polypeptide reads, in one-letter code: Cobyric acid synthase (488 aa).

Positions 248–441 constitute a GATase cobBQ-type domain; that stretch reads VLRVVVPALP…VHGLFDTPAA (194 aa). The Nucleophile role is filled by Cys328. The active site involves His433.

It belongs to the CobB/CobQ family. CobQ subfamily.

It participates in cofactor biosynthesis; adenosylcobalamin biosynthesis. Functionally, catalyzes amidations at positions B, D, E, and G on adenosylcobyrinic A,C-diamide. NH(2) groups are provided by glutamine, and one molecule of ATP is hydrogenolyzed for each amidation. The sequence is that of Cobyric acid synthase from Burkholderia vietnamiensis (strain G4 / LMG 22486) (Burkholderia cepacia (strain R1808)).